We begin with the raw amino-acid sequence, 588 residues long: MSDKKIKGLEWQEKPLSDNERLKTDSNFLRGTILDDLKDGLTGGFKGDNFQLIRFHGMYEQDDRDIRAERLEEKLEPLKFMLLRCRLPGGIIKPYQWIEIDKFAREHTRYQSIRLTNRQTFQYHGVPKGKLQPMHRLLHSIGLDSIATAADMNRNVLCTSNPIESELHQQAYEFAKKISEHLLPRSRGYLDVWVDGKKVESSDDLLKIEDEPILGKTYLPRKFKTAVAIPPLNDVDVYANDLNFIAIQDENGQLCGFNVLVGGGLSFEHGNTKTYPNVAYSLGFVPLEHTLAAAEGVVKTQRDFGNRSDRKNARVRYTVQNMTLDGFRAEVERCMNIKFEPTRPYEFTERGDRIGWVKGIDNNWHLTLFIESGRITDKPEKPLMTGVLELAKVHKGDFRITANQNLIVANVAEQDKAQIEAIARQYGLIQEISKLRENAMSCVSLPTCPLAMAEAERVLPDFISELDKVLSKHNVADESIITRITGCPNGCRRAMLAEIGLVGKAIGRYNLHIGGDRAGLRIPRLYKENITLQEIVNEIDQLVARWATERQTNEAFGDFVIRSNIIAPVVNAHIDFWDATKIIPTTII.

Residues Cys-442, Cys-448, Cys-487, and Cys-491 each coordinate [4Fe-4S] cluster. Cys-491 is a binding site for siroheme.

It belongs to the nitrite and sulfite reductase 4Fe-4S domain family. Alpha(8)-beta(8). The alpha component is a flavoprotein, the beta component is a hemoprotein. Siroheme is required as a cofactor. Requires [4Fe-4S] cluster as cofactor.

It catalyses the reaction hydrogen sulfide + 3 NADP(+) + 3 H2O = sulfite + 3 NADPH + 4 H(+). It participates in sulfur metabolism; hydrogen sulfide biosynthesis; hydrogen sulfide from sulfite (NADPH route): step 1/1. In terms of biological role, component of the sulfite reductase complex that catalyzes the 6-electron reduction of sulfite to sulfide. This is one of several activities required for the biosynthesis of L-cysteine from sulfate. This is Sulfite reductase [NADPH] hemoprotein beta-component from Actinobacillus pleuropneumoniae serotype 3 (strain JL03).